The sequence spans 304 residues: UDP-N-acetylenolpyruvoylglucosamine reductase (304 aa).

Residues 33 to 198 (RVGGPADILV…IEATVELESG (166 aa)) enclose the FAD-binding PCMH-type domain. The active site involves arginine 177. The active-site Proton donor is serine 227. Residue glutamate 297 is part of the active site.

Belongs to the MurB family. The cofactor is FAD.

The protein resides in the cytoplasm. It carries out the reaction UDP-N-acetyl-alpha-D-muramate + NADP(+) = UDP-N-acetyl-3-O-(1-carboxyvinyl)-alpha-D-glucosamine + NADPH + H(+). The protein operates within cell wall biogenesis; peptidoglycan biosynthesis. Cell wall formation. The chain is UDP-N-acetylenolpyruvoylglucosamine reductase from Clostridium perfringens (strain ATCC 13124 / DSM 756 / JCM 1290 / NCIMB 6125 / NCTC 8237 / Type A).